The following is a 421-amino-acid chain: Subtilisin-like protease 2 (421 aa).

The signal sequence occupies residues 1-16 (MQLLNFGLLLLPFVAG). Residues 17-122 (DLAPQPEPLL…VHPDQHVYLA (106 aa)) constitute a propeptide that is removed on maturation. The Inhibitor I9 domain occupies 36-122 (QYIVTLKEGL…VHPDQHVYLA (87 aa)). The Peptidase S8 domain occupies 131-421 (RWGLGYMSSK…ERKFTLPKYY (291 aa)). Active-site charge relay system residues include aspartate 169 and histidine 201. N-linked (GlcNAc...) asparagine glycosylation is found at asparagine 248, asparagine 261, and asparagine 348. Catalysis depends on serine 357, which acts as the Charge relay system. An N-linked (GlcNAc...) asparagine glycan is attached at asparagine 388.

This sequence belongs to the peptidase S8 family.

The protein resides in the secreted. Functionally, secreted subtilisin-like serine protease with keratinolytic activity that contributes to pathogenicity. This Arthroderma benhamiae (strain ATCC MYA-4681 / CBS 112371) (Trichophyton mentagrophytes) protein is Subtilisin-like protease 2 (SUB2).